Consider the following 398-residue polypeptide: NADH-quinone oxidoreductase subunit D (398 aa).

The protein belongs to the complex I 49 kDa subunit family. In terms of assembly, NDH-1 is composed of 14 different subunits. Subunits NuoB, C, D, E, F, and G constitute the peripheral sector of the complex.

Its subcellular location is the cell inner membrane. It catalyses the reaction a quinone + NADH + 5 H(+)(in) = a quinol + NAD(+) + 4 H(+)(out). NDH-1 shuttles electrons from NADH, via FMN and iron-sulfur (Fe-S) centers, to quinones in the respiratory chain. The immediate electron acceptor for the enzyme in this species is believed to be ubiquinone. Couples the redox reaction to proton translocation (for every two electrons transferred, four hydrogen ions are translocated across the cytoplasmic membrane), and thus conserves the redox energy in a proton gradient. The sequence is that of NADH-quinone oxidoreductase subunit D from Rhodospirillum centenum (strain ATCC 51521 / SW).